Here is a 145-residue protein sequence, read N- to C-terminus: Basic leucine zipper 1 (145 aa).

A compositionally biased stretch (polar residues) spans 1–11 (MANAEKTSSGS). A disordered region spans residues 1–39 (MANAEKTSSGSDIDEKKRKRKLSNRESARRSRLKKQKLM). One can recognise a bZIP domain in the interval 14–77 (DEKKRKRKLS…DSVETENAGL (64 aa)). Positions 16-37 (KKRKRKLSNRESARRSRLKKQK) are basic motif. A leucine-zipper region spans residues 46-53 (ISSLERRI).

The protein belongs to the bZIP family. In terms of assembly, interacts with ZFP7, BZIP4, BZIP9, BZIP10, BZIP11, BZIP25, BZIP42, BZIP44, BZIP53, BZIP58 and BZIP63. In terms of tissue distribution, expressed in both shoots, including young leaves, stipulae and trichomes (except in cotyledons and hypocotyl), and roots, including vascular tissues (e.g. in both the phloem and the xylem). Present in seeds and pollen. Restricted to vasculatures and roots in the presence of sucrose or glucose.

It localises to the nucleus. Transcription factor that binds to the C-box-like motif (5'-TGCTGACGTCA-3') and G-box-like motif (5'-CCACGTGGCC-3'), ABRE elements, of gene promoters involved in sugar signaling. Activated by low energy stress both at transcriptional and post-transcriptional mechanisms. Promotes dark-induced senescence and participates in the transcriptional reprogramming of amino acid metabolism during the dark-induced starvation response. Transcription activator of the mannan synthase CSLA9. Recognizes and binds to DNA-specific sequence of CSLA9 promoter. The polypeptide is Basic leucine zipper 1 (BZIP1) (Arabidopsis thaliana (Mouse-ear cress)).